The primary structure comprises 203 residues: E3 ubiquitin-protein ligase RNF152 (203 aa).

The segment at 12-55 adopts an RING-type zinc-finger fold; that stretch reads CQICFNYYSPRRRPKLLDCKHTCCSVCLQQMRTSQKDVRCPWCR. Residues 106–165 are necessary for interaction with RRAGA; it reads ISKERTLLPGDMGCRLLPGSQQKSLTVVTIPAEQQPLQGGAPPEAVEEEPDRRGVVKSST. The disordered stretch occupies residues 139–158; that stretch reads QQPLQGGAPPEAVEEEPDRR. Residues 167-187 traverse the membrane as a helical segment; it reads SGVCTVILVACVLVFLLGIVL.

Belongs to the RNF152 family. Interacts with RRAGA (inactive GDP-bound form); stimulated by amino acid starvation. Interacts with SEC16A. Post-translationally, ubiquitinated. Autoubiquitinated in vitro, leading to its degradation by the proteasome.

The protein resides in the lysosome membrane. It catalyses the reaction S-ubiquitinyl-[E2 ubiquitin-conjugating enzyme]-L-cysteine + [acceptor protein]-L-lysine = [E2 ubiquitin-conjugating enzyme]-L-cysteine + N(6)-ubiquitinyl-[acceptor protein]-L-lysine.. It participates in protein modification; protein ubiquitination. Its function is as follows. E3 ubiquitin-protein ligase that acts as a negative regulator of mTORC1 signaling by mediating ubiquitination of RagA/RRAGA and RHEB. Catalyzes 'Lys-63'-linked polyubiquitination of RagA/RRAGA in response to amino acid starvation, thereby regulating mTORC1 signaling. Also mediates monoubiquitination of RHEB, promoting its association with the TSC-TBC complex and subsequent inhibition. Also mediates 'Lys-48'-linked polyubiquitination of target proteins and their subsequent targeting to the proteasome for degradation. Induces apoptosis when overexpressed. The chain is E3 ubiquitin-protein ligase RNF152 from Mus musculus (Mouse).